The chain runs to 307 residues: Membrane protein insertase YidC 2 (307 aa).

An N-terminal signal peptide occupies residues 1–23 (MKLTLNRILFSGLALSILFTLTG). The N-palmitoyl cysteine moiety is linked to residue Cys-24. Residue Cys-24 is the site of S-diacylglycerol cysteine attachment. Transmembrane regions (helical) follow at residues 58 to 78 (LGYG…ILPL), 135 to 155 (LGGI…AMYF), 179 to 199 (VLTA…MMAV), 209 to 225 (TMMY…SFSL), and 231 to 251 (LYWL…TYLL). Residues 263–307 (YAKNPPKAYQSTSSRKDVTPSQNMEQANLPKKIKSNRNAGKQRKR) form a disordered region. Residues 271-288 (YQSTSSRKDVTPSQNMEQ) are compositionally biased toward polar residues. The span at 293 to 307 (KKIKSNRNAGKQRKR) shows a compositional bias: basic residues.

It belongs to the OXA1/ALB3/YidC family. Type 2 subfamily.

Its subcellular location is the cell membrane. Required for the insertion and/or proper folding and/or complex formation of integral membrane proteins into the membrane. Involved in integration of membrane proteins that insert both dependently and independently of the Sec translocase complex, as well as at least some lipoproteins. This is Membrane protein insertase YidC 2 from Streptococcus pyogenes serotype M3 (strain ATCC BAA-595 / MGAS315).